A 331-amino-acid chain; its full sequence is Beta-ketoacyl-[acyl-carrier-protein] synthase III (331 aa).

Catalysis depends on residues Cys116 and His256. Positions 257–261 are ACP-binding; that stretch reads QANTR. Asn286 is an active-site residue.

It belongs to the thiolase-like superfamily. FabH family. Homodimer.

It is found in the cytoplasm. The catalysed reaction is malonyl-[ACP] + acetyl-CoA + H(+) = 3-oxobutanoyl-[ACP] + CO2 + CoA. The protein operates within lipid metabolism; fatty acid biosynthesis. Its function is as follows. Catalyzes the condensation reaction of fatty acid synthesis by the addition to an acyl acceptor of two carbons from malonyl-ACP. Catalyzes the first condensation reaction which initiates fatty acid synthesis and may therefore play a role in governing the total rate of fatty acid production. Possesses both acetoacetyl-ACP synthase and acetyl transacylase activities. Its substrate specificity determines the biosynthesis of branched-chain and/or straight-chain of fatty acids. This Caldanaerobacter subterraneus subsp. tengcongensis (strain DSM 15242 / JCM 11007 / NBRC 100824 / MB4) (Thermoanaerobacter tengcongensis) protein is Beta-ketoacyl-[acyl-carrier-protein] synthase III.